The following is a 314-amino-acid chain: Olfactory receptor 9A1 (314 aa).

The Extracellular portion of the chain corresponds to 1 to 24; the sequence is MLGNYSSATEFFLLGFPGSQEVCR. Asparagine 4 is a glycosylation site (N-linked (GlcNAc...) asparagine). A helical transmembrane segment spans residues 25–45; that stretch reads ILFATFFLLYAVTVMGNVVII. The Cytoplasmic portion of the chain corresponds to 46–64; that stretch reads ITVCVDKCLQSPIYFFLGH. The chain crosses the membrane as a helical span at residues 65-85; it reads LCVLEILITSTAVPFMLWGLL. Topologically, residues 86 to 99 are extracellular; the sequence is LPSTQIMSLTACAA. Cysteine 97 and cysteine 179 form a disulfide bridge. A helical membrane pass occupies residues 100-120; the sequence is QLYLYLSLGTLELALMGVMAV. Residues 121–140 lie on the Cytoplasmic side of the membrane; sequence DRYVAVCNPLRYNIIMNSST. The chain crosses the membrane as a helical span at residues 141 to 161; the sequence is FIWVIIVSWVLGFLSEIWPVY. Residues 162 to 196 lie on the Extracellular side of the membrane; that stretch reads ATFQLTFCKSSVLDHFYCDRGQLLKVSCEDTLFRE. A helical membrane pass occupies residues 197 to 217; it reads FILFLMAVFIIIGSLIPTIVS. The Cytoplasmic segment spans residues 218–239; that stretch reads YTYIISTNLKIPSASGWRKSFS. The helical transmembrane segment at 240-260 threads the bilayer; it reads TCASHFTYVVIGYGSCLFLYV. Topologically, residues 261 to 271 are extracellular; sequence KPKQTQAAEYN. Residues 272 to 292 form a helical membrane-spanning segment; sequence RVVSLLVLVVTPFLNPFIFTL. The Cytoplasmic portion of the chain corresponds to 293-314; that stretch reads RNDKFIQAFGDGMKHCYKLLKN.

Belongs to the G-protein coupled receptor 1 family.

It localises to the cell membrane. Its function is as follows. Odorant receptor. In Homo sapiens (Human), this protein is Olfactory receptor 9A1 (OR9A1P).